We begin with the raw amino-acid sequence, 408 residues long: Repulsive guidance molecule B homolog drag-1 (408 aa).

Residues 1 to 22 form the signal peptide; that stretch reads MSIVYLVSITFIFSVFKPITSC. At 23–387 the chain is on the extracellular side; sequence RVEECAAWFQ…SEIFKKCIPS (365 aa). N-linked (GlcNAc...) asparagine glycans are attached at residues Asn-60, Asn-134, Asn-183, and Asn-376. The helical transmembrane segment at 388 to 408 threads the bilayer; that stretch reads KSIRFYPFLAIFFFALLSLLC.

The protein belongs to the repulsive guidance molecule (RGM) family. Interacts with unc-40 (via FN6 domain), dbl-1 and sma-6. As to expression, expressed in pharyngeal, hypodermal and intestinal cells.

The protein localises to the cell membrane. Probably in association with the cell surface receptor unc-40, positively modulates the BMP-like Sma/Mab signaling pathway through interaction with both the ligand dbl-1 and its type I receptor sma-6. Regulates body size and this may be through modulation of the Sma/Mab signaling pathway. The polypeptide is Repulsive guidance molecule B homolog drag-1 (Caenorhabditis elegans).